The following is a 400-amino-acid chain: Diphosphomevalonate decarboxylase (400 aa).

At Ala2 the chain carries N-acetylalanine. (R)-5-diphosphomevalonate-binding positions include Tyr23–Lys26, Arg78, Ser156–Arg161, and Thr212.

Belongs to the diphosphomevalonate decarboxylase family. In terms of assembly, homodimer.

Its subcellular location is the cytoplasm. It carries out the reaction (R)-5-diphosphomevalonate + ATP = isopentenyl diphosphate + ADP + phosphate + CO2. It participates in steroid biosynthesis; cholesterol biosynthesis. Catalyzes the ATP dependent decarboxylation of (R)-5-diphosphomevalonate to form isopentenyl diphosphate (IPP). Functions in the mevalonate (MVA) pathway leading to isopentenyl diphosphate (IPP), a key precursor for the biosynthesis of isoprenoids and sterol synthesis. The sequence is that of Diphosphomevalonate decarboxylase (MVD) from Bos taurus (Bovine).